The sequence spans 214 residues: Pyridoxine/pyridoxamine 5'-phosphate oxidase (214 aa).

Substrate is bound by residues 8–11 (RINY) and lysine 66. Residues 61 to 66 (RIVLIK), 76 to 77 (FT), arginine 82, lysine 83, and glutamine 105 contribute to the FMN site. Substrate contacts are provided by tyrosine 123, arginine 127, and serine 131. Residues 140-141 (QS) and tryptophan 184 each bind FMN. 190-192 (RLH) provides a ligand contact to substrate. Position 194 (arginine 194) interacts with FMN.

The protein belongs to the pyridoxamine 5'-phosphate oxidase family. Homodimer. It depends on FMN as a cofactor.

It carries out the reaction pyridoxamine 5'-phosphate + O2 + H2O = pyridoxal 5'-phosphate + H2O2 + NH4(+). The catalysed reaction is pyridoxine 5'-phosphate + O2 = pyridoxal 5'-phosphate + H2O2. Its pathway is cofactor metabolism; pyridoxal 5'-phosphate salvage; pyridoxal 5'-phosphate from pyridoxamine 5'-phosphate: step 1/1. The protein operates within cofactor metabolism; pyridoxal 5'-phosphate salvage; pyridoxal 5'-phosphate from pyridoxine 5'-phosphate: step 1/1. Its function is as follows. Catalyzes the oxidation of either pyridoxine 5'-phosphate (PNP) or pyridoxamine 5'-phosphate (PMP) into pyridoxal 5'-phosphate (PLP). In Burkholderia ambifaria (strain ATCC BAA-244 / DSM 16087 / CCUG 44356 / LMG 19182 / AMMD) (Burkholderia cepacia (strain AMMD)), this protein is Pyridoxine/pyridoxamine 5'-phosphate oxidase.